The following is a 185-amino-acid chain: Ribosome-recycling factor (185 aa).

Residues 137-158 form a disordered region; it reads DELKKLEKDHTASEDEVKRAQD.

This sequence belongs to the RRF family.

Its subcellular location is the cytoplasm. Responsible for the release of ribosomes from messenger RNA at the termination of protein biosynthesis. May increase the efficiency of translation by recycling ribosomes from one round of translation to another. This is Ribosome-recycling factor from Desulfitobacterium hafniense (strain Y51).